Here is a 511-residue protein sequence, read N- to C-terminus: V-type proton ATPase subunit B, brain isoform (511 aa).

Position 400 (Arg-400) interacts with ATP.

This sequence belongs to the ATPase alpha/beta chains family. In terms of assembly, V-ATPase is a heteromultimeric enzyme made up of two complexes: the ATP-hydrolytic V1 complex and the proton translocation V0 complex. The V1 complex consists of three catalytic AB heterodimers that form a heterohexamer, three peripheral stalks each consisting of EG heterodimers, one central rotor including subunits D and F, and the regulatory subunits C and H. The proton translocation complex V0 consists of the proton transport subunit a, a ring of proteolipid subunits c9c'', rotary subunit d, subunits e and f, and the accessory subunits ATP6AP1/Ac45 and ATP6AP2/PRR. In terms of tissue distribution, kidney; localizes to early distal nephron, encompassing thick ascending limbs and distal convoluted tubules (at protein level).

The protein localises to the apical cell membrane. It is found in the melanosome. It localises to the cytoplasm. The protein resides in the cytoplasmic vesicle. Its subcellular location is the secretory vesicle. The protein localises to the synaptic vesicle membrane. It is found in the clathrin-coated vesicle membrane. Its function is as follows. Non-catalytic subunit of the V1 complex of vacuolar(H+)-ATPase (V-ATPase), a multisubunit enzyme composed of a peripheral complex (V1) that hydrolyzes ATP and a membrane integral complex (V0) that translocates protons. V-ATPase is responsible for acidifying and maintaining the pH of intracellular compartments and in some cell types, is targeted to the plasma membrane, where it is responsible for acidifying the extracellular environment. In renal intercalated cells, can partially compensate the lack of ATP6V1B1 and mediate secretion of protons (H+) into the urine under base-line conditions but not in conditions of acid load. In Homo sapiens (Human), this protein is V-type proton ATPase subunit B, brain isoform (ATP6V1B2).